A 235-amino-acid polypeptide reads, in one-letter code: MSTKFWLVVPAAGVGARMAADRPKQYLQVGGRCIIEHTLDCFLDHPDLLGAVVCLAVDDPYWPQLAVASDPRVRRAPGGRERADSVLAGLDALQAAGAGEQDWVLVHDAARPNLAREDLQRLLAVLADDPVGGLLAVPVRDTLKRADADGRVAQTVDRSQIWQAYTPQMFRLGALSQALRGALAAGVPITDEASALEWCGQSSRLVEGRADNLKITRPEDLAWLRQAWVERDRQR.

It belongs to the IspD/TarI cytidylyltransferase family. IspD subfamily.

The enzyme catalyses 2-C-methyl-D-erythritol 4-phosphate + CTP + H(+) = 4-CDP-2-C-methyl-D-erythritol + diphosphate. The protein operates within isoprenoid biosynthesis; isopentenyl diphosphate biosynthesis via DXP pathway; isopentenyl diphosphate from 1-deoxy-D-xylulose 5-phosphate: step 2/6. Functionally, catalyzes the formation of 4-diphosphocytidyl-2-C-methyl-D-erythritol from CTP and 2-C-methyl-D-erythritol 4-phosphate (MEP). The protein is 2-C-methyl-D-erythritol 4-phosphate cytidylyltransferase of Ectopseudomonas mendocina (strain ymp) (Pseudomonas mendocina).